The following is a 296-amino-acid chain: Ribosomal RNA small subunit methyltransferase A (296 aa).

N31, L33, G58, E79, D111, and N136 together coordinate S-adenosyl-L-methionine.

It belongs to the class I-like SAM-binding methyltransferase superfamily. rRNA adenine N(6)-methyltransferase family. RsmA subfamily.

It is found in the cytoplasm. It catalyses the reaction adenosine(1518)/adenosine(1519) in 16S rRNA + 4 S-adenosyl-L-methionine = N(6)-dimethyladenosine(1518)/N(6)-dimethyladenosine(1519) in 16S rRNA + 4 S-adenosyl-L-homocysteine + 4 H(+). In terms of biological role, specifically dimethylates two adjacent adenosines (A1518 and A1519) in the loop of a conserved hairpin near the 3'-end of 16S rRNA in the 30S particle. May play a critical role in biogenesis of 30S subunits. The chain is Ribosomal RNA small subunit methyltransferase A from Lactobacillus johnsonii (strain CNCM I-12250 / La1 / NCC 533).